Reading from the N-terminus, the 244-residue chain is MVKQELKIQVTTSSSSLSHSSSSSSSSTSALRHQSCKNKIKKYKGVRMRSWGSWVTEIRAPNQKTRIWLGSYSTAEAAARAYDAALLCLKGPKANLNFPNITTTSPFLMNIDEKTLLSPKSIQKVAAQAANSSSDHFTPPSDENDHDHDDGLDHHPSASSSAASSPPDDDHHNDDDGDLVSLMESFVDYNEHVSLMDPSLYEFGHNEIFFTNGDPFDYSPQLHSSEATMDDFYDDVDIPLWSFS.

The disordered stretch occupies residues 1–33; that stretch reads MVKQELKIQVTTSSSSLSHSSSSSSSSTSALRH. Residues 11 to 29 are compositionally biased toward low complexity; it reads TTSSSSLSHSSSSSSSSTS. The AP2/ERF DNA-binding region spans 42–99; the sequence is KYKGVRMRSWGSWVTEIRAPNQKTRIWLGSYSTAEAAARAYDAALLCLKGPKANLNFP. Residues 123-178 are disordered; it reads QKVAAQAANSSSDHFTPPSDENDHDHDDGLDHHPSASSSAASSPPDDDHHNDDDGD. Residues 143 to 156 show a composition bias toward basic and acidic residues; it reads ENDHDHDDGLDHHP. Residues 157-166 show a composition bias toward low complexity; that stretch reads SASSSAASSP.

The protein belongs to the AP2/ERF transcription factor family. ERF subfamily.

The protein resides in the nucleus. Its function is as follows. Probably acts as a transcriptional activator. Binds to the GCC-box pathogenesis-related promoter element. May be involved in the regulation of gene expression by stress factors and by components of stress signal transduction pathways. The sequence is that of Ethylene-responsive transcription factor ERF013 (ERF013) from Arabidopsis thaliana (Mouse-ear cress).